A 75-amino-acid chain; its full sequence is U6-lycotoxin-Ls1d (75 aa).

Residues 1–21 (MKLLLFTALVLVVISLVEVEA) form the signal peptide. A propeptide spanning residues 22–25 (ENER) is cleaved from the precursor.

The protein belongs to the neurotoxin 19 (CSTX) family. 06 (U6-Lctx) subfamily. Post-translationally, contains 4 disulfide bonds. Expressed by the venom gland.

It localises to the secreted. In Lycosa singoriensis (Wolf spider), this protein is U6-lycotoxin-Ls1d.